The primary structure comprises 330 residues: Aspartate--ammonia ligase (330 aa).

Belongs to the class-II aminoacyl-tRNA synthetase family. AsnA subfamily.

Its subcellular location is the cytoplasm. The catalysed reaction is L-aspartate + NH4(+) + ATP = L-asparagine + AMP + diphosphate + H(+). It functions in the pathway amino-acid biosynthesis; L-asparagine biosynthesis; L-asparagine from L-aspartate (ammonia route): step 1/1. This Escherichia coli O81 (strain ED1a) protein is Aspartate--ammonia ligase.